The sequence spans 288 residues: 5,10-methylenetetrahydrofolate reductase (288 aa).

FAD is bound by residues Ala-51, His-73, Gly-106, Asp-107, Ala-118, Tyr-140, His-144, and Lys-159. Asp-107 is a binding site for (6S)-5-methyl-5,6,7,8-tetrahydrofolate. Gln-175 is a (6S)-5-methyl-5,6,7,8-tetrahydrofolate binding site. Gln-175 is a binding site for NADH.

It belongs to the methylenetetrahydrofolate reductase family. Requires FAD as cofactor.

The enzyme catalyses (6S)-5-methyl-5,6,7,8-tetrahydrofolate + NAD(+) = (6R)-5,10-methylene-5,6,7,8-tetrahydrofolate + NADH + H(+). The protein operates within one-carbon metabolism; tetrahydrofolate interconversion. It participates in amino-acid biosynthesis; L-methionine biosynthesis via de novo pathway. In terms of biological role, catalyzes the NADH-dependent reduction of 5,10-methylenetetrahydrofolate to 5-methyltetrahydrofolate. Is required to provide the methyl group necessary for methionine synthetase to convert homocysteine to methionine; the methyl group is given by 5-methyltetrahydrofolate. Is required for Sphingobium SYK-6 to grow on vanillate or syringate as the sole source of carbon. This Sphingobium sp. (strain NBRC 103272 / SYK-6) protein is 5,10-methylenetetrahydrofolate reductase.